We begin with the raw amino-acid sequence, 188 residues long: GMP synthase [glutamine-hydrolyzing] subunit A (188 aa).

A Glutamine amidotransferase type-1 domain is found at 1–188 (MIVILDNGGQ…FCKVCGYKFE (188 aa)). The Nucleophile role is filled by Cys76. Residues His163 and Glu165 contribute to the active site.

As to quaternary structure, heterodimer composed of a glutamine amidotransferase subunit (A) and a GMP-binding subunit (B).

The catalysed reaction is XMP + L-glutamine + ATP + H2O = GMP + L-glutamate + AMP + diphosphate + 2 H(+). It participates in purine metabolism; GMP biosynthesis; GMP from XMP (L-Gln route): step 1/1. Its function is as follows. Catalyzes the synthesis of GMP from XMP. In Methanocaldococcus jannaschii (strain ATCC 43067 / DSM 2661 / JAL-1 / JCM 10045 / NBRC 100440) (Methanococcus jannaschii), this protein is GMP synthase [glutamine-hydrolyzing] subunit A.